Here is a 79-residue protein sequence, read N- to C-terminus: Peptide Im-5 (79 aa).

Positions 1 to 23 (MKYRKQLLVLFFAYFLVVNESEA) are cleaved as a signal peptide. The propeptide occupies 49–79 (RALMKRDLQDRMDPYQRNLKLDRYLKQLALD).

This sequence belongs to the non-disulfide-bridged peptide (NDBP) superfamily. Medium-length antimicrobial peptide (group 3) family. In terms of tissue distribution, expressed by the venom gland.

Its subcellular location is the secreted. It is found in the target cell membrane. Its function is as follows. Antimicrobial peptide that may act by disrupting the integrity of the bacterial cell membrane. Has antibacterial activity against Gram-negative bacterium E.coli NBRC 3972 (MIC=10 uM) and against Gram-positive bacteria S.aureus NBRC 13276 (MIC=2.5-5 uM) and B.subtilis NBRC 3009 (MIC=0.5-1 uM). Also shows potent activity against antibiotic-sensitive and -resistant Acinetobacter baumannii (MIC=1.8-3.6 uM). Shows cytolytic activity against human and sheep erythrocytes. Toxic to cricket A.domestica. The protein is Peptide Im-5 of Isometrus maculatus (Lesser brown scorpion).